A 63-amino-acid polypeptide reads, in one-letter code: uncharacterized protein (63 aa).

The chain crosses the membrane as a helical span at residues 38-58; that stretch reads ISLFIILHLCLLVCLLLSFYF.

The protein localises to the membrane. This is an uncharacterized protein from Saccharomyces cerevisiae (strain ATCC 204508 / S288c) (Baker's yeast).